The sequence spans 457 residues: Protein translocase subunit SecY (457 aa).

The Cytoplasmic portion of the chain corresponds to 1 to 20; it reads MGVIDVLAAVGERFPAVRKP. Residues 21–47 traverse the membrane as a helical segment; sequence ERKPTLYRRLAWTGVILVLYFIMSNIP. The Extracellular portion of the chain corresponds to 48-59; sequence LYGIPPQNIGGQ. Residues 60 to 67 constitute an intramembrane region (helical); that stretch reads VDLQRIIF. A discontinuously helical membrane pass occupies residues 60–88; sequence VDLQRIIFASSAGTLMELGIGPIVTASLI. An intramembrane segment occupies 68–79; it reads ASSAGTLMELGI. An intramembrane region (helical) is located at residues 80–88; sequence GPIVTASLI. The Cytoplasmic segment spans residues 89-109; the sequence is IQVLVGAKIIKLDLADPEGRR. The chain crosses the membrane as a helical span at residues 110 to 134; the sequence is KFTSAQKVLALAFAALEAVAFTVGG. Over 135–146 the chain is Extracellular; sequence RYWVGTAIEPGP. Residues 147-171 form a helical membrane-spanning segment; that stretch reads LDYALVSLQLFLGALLVIYFDEVMQ. The Cytoplasmic segment spans residues 172–178; sequence KGWGIGS. A helical transmembrane segment spans residues 179 to 197; it reads AISLFILAGVAQGVVWSIF. At 198–229 the chain is on the extracellular side; that stretch reads GTIPGVAQDYGLVPAIISNPDLTLLARPNGFP. Residues 230–251 form a helical membrane-spanning segment; sequence DLTGFFTTLAAIILLVYLQAMR. Residues 252–276 lie on the Cytoplasmic side of the membrane; the sequence is VEIPITSERFKGIRSRVPLQFIYVT. Residues 277 to 298 form a helical membrane-spanning segment; it reads NIPILLVGILVSDLLLVQRLLA. Topologically, residues 299 to 332 are extracellular; sequence DYLGVESRAYQIYSSIVYYLSPPRGVVQSIADPV. Residues 333-352 traverse the membrane as a helical segment; that stretch reads KTAVFIASWTVLSIVFGYMW. Topologically, residues 353–395 are cytoplasmic; sequence VEIAGLNPREQAERLIKGGLAIPGMRSDPRVLERVLRRYIYPL. The helical transmembrane segment at 396-414 threads the bilayer; the sequence is TFLSSLIVAALVIVADIFG. Over 415–417 the chain is Extracellular; that stretch reads AYG. A helical membrane pass occupies residues 418–432; it reads TGTGLLLAVGIINQY. Topologically, residues 433 to 457 are cytoplasmic; that stretch reads YAMITRERALETYPLLRRILGEEVV.

Belongs to the SecY/SEC61-alpha family. In terms of assembly, component of the Sec protein translocase complex. Heterotrimer consisting of alpha (SecY), beta (SecG) and gamma (SecE) subunits. The heterotrimers can form oligomers, although 1 heterotrimer is thought to be able to translocate proteins. Interacts with the ribosome. May interact with SecDF, and other proteins may be involved.

Its subcellular location is the cell membrane. In terms of biological role, the central subunit of the protein translocation channel SecYEG. Consists of two halves formed by TMs 1-5 and 6-10. These two domains form a lateral gate at the front which open onto the bilayer between TMs 2 and 7, and are clamped together by SecE at the back. The channel is closed by both a pore ring composed of hydrophobic SecY resides and a short helix (helix 2A) on the extracellular side of the membrane which forms a plug. The plug probably moves laterally to allow the channel to open. The ring and the pore may move independently. This Aeropyrum pernix (strain ATCC 700893 / DSM 11879 / JCM 9820 / NBRC 100138 / K1) protein is Protein translocase subunit SecY.